The sequence spans 141 residues: Large ribosomal subunit protein uL11 (141 aa).

The protein belongs to the universal ribosomal protein uL11 family. Part of the ribosomal stalk of the 50S ribosomal subunit. Interacts with L10 and the large rRNA to form the base of the stalk. L10 forms an elongated spine to which L12 dimers bind in a sequential fashion forming a multimeric L10(L12)X complex. In terms of processing, one or more lysine residues are methylated.

Functionally, forms part of the ribosomal stalk which helps the ribosome interact with GTP-bound translation factors. In Carboxydothermus hydrogenoformans (strain ATCC BAA-161 / DSM 6008 / Z-2901), this protein is Large ribosomal subunit protein uL11.